Consider the following 472-residue polypeptide: Hepatocyte nuclear factor 3-alpha (472 aa).

Positions 169-260 (AKPPYSYISL…GNMFENGCYL (92 aa)) form a DNA-binding region, fork-head. The tract at residues 269 to 392 (EKQPGAGGGG…ESQLHLKGDP (124 aa)) is disordered. Over residues 273–289 (GAGGGGGSGSGGSGAKG) the composition is skewed to gly residues. Residues S307 and S331 each carry the phosphoserine modification. 2 stretches are compositionally biased toward low complexity: residues 322 to 332 (GAPAPGPAASP) and 351 to 366 (TPASSTAPPISSGPGA).

In terms of assembly, binds DNA as a monomer. Interacts with FOXA2. Interacts with NKX2-1. Interacts with HDAC7. Interacts with the histone H3-H4 heterodimer. Associates with nucleosomes containing histone H2A. Interacts with AR. Interacts with NR0B2. Highly expressed in prostate and ESR1-positive breast tumors. Overexpressed in esophageal and lung adenocarcinomas.

It is found in the nucleus. Transcription factor that is involved in embryonic development, establishment of tissue-specific gene expression and regulation of gene expression in differentiated tissues. Is thought to act as a 'pioneer' factor opening the compacted chromatin for other proteins through interactions with nucleosomal core histones and thereby replacing linker histones at target enhancer and/or promoter sites. Binds DNA with the consensus sequence 5'-[AC]A[AT]T[AG]TT[GT][AG][CT]T[CT]-3'. Proposed to play a role in translating the epigenetic signatures into cell type-specific enhancer-driven transcriptional programs. Its differential recruitment to chromatin is dependent on distribution of histone H3 methylated at 'Lys-5' (H3K4me2) in estrogen-regulated genes. Involved in the development of multiple endoderm-derived organ systems such as liver, pancreas, lung and prostate; FOXA1 and FOXA2 seem to have at least in part redundant roles. Modulates the transcriptional activity of nuclear hormone receptors. Is involved in ESR1-mediated transcription; required for ESR1 binding to the NKX2-1 promoter in breast cancer cells; binds to the RPRM promoter and is required for the estrogen-induced repression of RPRM. Involved in regulation of apoptosis by inhibiting the expression of BCL2. Involved in cell cycle regulation by activating expression of CDKN1B, alone or in conjunction with BRCA1. Originally described as a transcription activator for a number of liver genes such as AFP, albumin, tyrosine aminotransferase, PEPCK, etc. Interacts with the cis-acting regulatory regions of these genes. Involved in glucose homeostasis. The protein is Hepatocyte nuclear factor 3-alpha (FOXA1) of Homo sapiens (Human).